We begin with the raw amino-acid sequence, 207 residues long: Thiamine-phosphate synthase (207 aa).

4-amino-2-methyl-5-(diphosphooxymethyl)pyrimidine is bound by residues 36–40 and aspartate 68; that span reads QMRIK. The Mg(2+) site is built by aspartate 69 and aspartate 88. Serine 106 lines the 4-amino-2-methyl-5-(diphosphooxymethyl)pyrimidine pocket. Residue 132-134 participates in 2-[(2R,5Z)-2-carboxy-4-methylthiazol-5(2H)-ylidene]ethyl phosphate binding; the sequence is TKT. Lysine 135 lines the 4-amino-2-methyl-5-(diphosphooxymethyl)pyrimidine pocket. Residues glycine 162 and 182-183 each bind 2-[(2R,5Z)-2-carboxy-4-methylthiazol-5(2H)-ylidene]ethyl phosphate; that span reads IS.

This sequence belongs to the thiamine-phosphate synthase family. It depends on Mg(2+) as a cofactor.

It catalyses the reaction 2-[(2R,5Z)-2-carboxy-4-methylthiazol-5(2H)-ylidene]ethyl phosphate + 4-amino-2-methyl-5-(diphosphooxymethyl)pyrimidine + 2 H(+) = thiamine phosphate + CO2 + diphosphate. The catalysed reaction is 2-(2-carboxy-4-methylthiazol-5-yl)ethyl phosphate + 4-amino-2-methyl-5-(diphosphooxymethyl)pyrimidine + 2 H(+) = thiamine phosphate + CO2 + diphosphate. The enzyme catalyses 4-methyl-5-(2-phosphooxyethyl)-thiazole + 4-amino-2-methyl-5-(diphosphooxymethyl)pyrimidine + H(+) = thiamine phosphate + diphosphate. It participates in cofactor biosynthesis; thiamine diphosphate biosynthesis; thiamine phosphate from 4-amino-2-methyl-5-diphosphomethylpyrimidine and 4-methyl-5-(2-phosphoethyl)-thiazole: step 1/1. Its function is as follows. Condenses 4-methyl-5-(beta-hydroxyethyl)thiazole monophosphate (THZ-P) and 2-methyl-4-amino-5-hydroxymethyl pyrimidine pyrophosphate (HMP-PP) to form thiamine monophosphate (TMP). In Pyrococcus furiosus (strain ATCC 43587 / DSM 3638 / JCM 8422 / Vc1), this protein is Thiamine-phosphate synthase.